We begin with the raw amino-acid sequence, 197 residues long: ATP-dependent Clp protease proteolytic subunit (197 aa).

The active-site Nucleophile is S98. H123 is an active-site residue.

This sequence belongs to the peptidase S14 family. In terms of assembly, fourteen ClpP subunits assemble into 2 heptameric rings which stack back to back to give a disk-like structure with a central cavity, resembling the structure of eukaryotic proteasomes.

The protein resides in the cytoplasm. The enzyme catalyses Hydrolysis of proteins to small peptides in the presence of ATP and magnesium. alpha-casein is the usual test substrate. In the absence of ATP, only oligopeptides shorter than five residues are hydrolyzed (such as succinyl-Leu-Tyr-|-NHMec, and Leu-Tyr-Leu-|-Tyr-Trp, in which cleavage of the -Tyr-|-Leu- and -Tyr-|-Trp bonds also occurs).. Its function is as follows. Cleaves peptides in various proteins in a process that requires ATP hydrolysis. Has a chymotrypsin-like activity. Plays a major role in the degradation of misfolded proteins. The chain is ATP-dependent Clp protease proteolytic subunit from Anaplasma phagocytophilum (strain HZ).